The sequence spans 327 residues: Zinc finger protein 444 (327 aa).

Position 1 is an N-acetylmethionine (methionine 1). Lysine 8 participates in a covalent cross-link: Glycyl lysine isopeptide (Lys-Gly) (interchain with G-Cter in SUMO2). Serine 18 and serine 104 each carry phosphoserine. The region spanning 20–104 (WHRFRRFHLG…LEELWGPAAS (85 aa)) is the SCAN box domain. Residues 101 to 171 (PAASPDGSSA…SPPLAPGLPA (71 aa)) form a disordered region. Positions 106 to 118 (DGSSATRVPQDVT) are enriched in polar residues. The span at 134–148 (PLAGTAPGAEGPAPG) shows a compositional bias: low complexity. 2 C2H2-type zinc fingers span residues 179 to 201 (TSCP…RQSH) and 207 to 229 (HACP…RDTH). Lysine 190 is covalently cross-linked (Glycyl lysine isopeptide (Lys-Gly) (interchain with G-Cter in SUMO2)). A disordered region spans residues 220 to 243 (EHLRRHRDTHPGSPGSPGPALRPL). The residue at position 235 (serine 235) is a Phosphoserine. C2H2-type zinc fingers lie at residues 250-272 (HACC…RKTH) and 278-300 (FACW…QRIH). Residues 305–314 (ASAQGAVAPG) show a composition bias toward low complexity. Residues 305–327 (ASAQGAVAPGPDGGGPFPPWPLG) are disordered.

The protein belongs to the krueppel C2H2-type zinc-finger protein family.

The protein resides in the nucleus. Its function is as follows. Transcriptional regulator. Binds to the 5'-flanking critical region of the SCARF1 promoter. This Homo sapiens (Human) protein is Zinc finger protein 444 (ZNF444).